The chain runs to 172 residues: R-phycocyanin-2 beta chain (172 aa).

N72 carries the post-translational modification N4-methylasparagine. Residue C82 coordinates (2R,3E)-phycocyanobilin. Residue C153 participates in (2R,3E)-phycoerythrobilin binding.

This sequence belongs to the phycobiliprotein family. Heterodimer of an alpha and a beta chain. Contains two covalently linked bilin chromophores.

It is found in the cellular thylakoid membrane. In terms of biological role, light-harvesting photosynthetic bile pigment-protein from the phycobiliprotein complex. The polypeptide is R-phycocyanin-2 beta chain (rpcB) (Synechococcus sp. (strain WH8020)).